Here is a 213-residue protein sequence, read N- to C-terminus: Peptide methionine sulfoxide reductase MsrA (213 aa).

The active site involves cysteine 52.

This sequence belongs to the MsrA Met sulfoxide reductase family.

The catalysed reaction is L-methionyl-[protein] + [thioredoxin]-disulfide + H2O = L-methionyl-(S)-S-oxide-[protein] + [thioredoxin]-dithiol. It catalyses the reaction [thioredoxin]-disulfide + L-methionine + H2O = L-methionine (S)-S-oxide + [thioredoxin]-dithiol. Functionally, has an important function as a repair enzyme for proteins that have been inactivated by oxidation. Catalyzes the reversible oxidation-reduction of methionine sulfoxide in proteins to methionine. The protein is Peptide methionine sulfoxide reductase MsrA of Enterobacter sp. (strain 638).